Reading from the N-terminus, the 635-residue chain is Sodium- and chloride-dependent creatine transporter 1 (635 aa).

Residues 1–27 (MAKKSAENGIYSVSGDEKKGPLIVSGP) form a disordered region. Residues 1–60 (MAKKSAENGIYSVSGDEKKGPLIVSGPDGAPAKGDGPAGLGAPGGRLAVPPRETWTRQMD) are Cytoplasmic-facing. Residues 61-81 (FIMSCVGFAVGLGNVWRFPYL) traverse the membrane as a helical segment. The Extracellular segment spans residues 82–87 (CYKNGG). Residues 88–108 (GVFLIPYVLIALVGGIPIFFL) traverse the membrane as a helical segment. At 109 to 138 (EISLGQFMKAGSINVWNICPLFKGLGYASM) the chain is on the cytoplasmic side. A helical transmembrane segment spans residues 139–159 (VIVFYCNTYYIMVLAWGFYYL). Residues 160 to 230 (VKSFTTTLPW…LSTGLEVPGA (71 aa)) are Extracellular-facing. N-linked (GlcNAc...) asparagine glycosylation is found at Asn192 and Asn197. A helical membrane pass occupies residues 231-251 (LNWEVTLCLLACWVLVYFCVW). Residues 252–269 (KGVKSTGKIVYFTATFPY) lie on the Cytoplasmic side of the membrane. The chain crosses the membrane as a helical span at residues 270–290 (VVLVVLLVRGVLLPGALDGII). The Extracellular portion of the chain corresponds to 291–304 (YYLKPDWSKLGSPQ). Residues 305-325 (VWIDAGTQIFFSYAIGLGALT) traverse the membrane as a helical segment. The Cytoplasmic portion of the chain corresponds to 326–341 (ALGSYNRFNNNCYKDA). A helical transmembrane segment spans residues 342-362 (IILALINSGTSFFAGFVVFSI). At 363-394 (LGFMATEQGVHISKVAESGPGLAFIAYPRAVT) the chain is on the extracellular side. A helical transmembrane segment spans residues 395–415 (LMPVAPLWAALFFFMLLLLGL). Residues 416 to 444 (DSQFVGVEGFITGLLDLLPASYYFRFQRE) lie on the Cytoplasmic side of the membrane. Residues 445–465 (ISVALCCALCFVIDLSMVTDG) traverse the membrane as a helical segment. At 466-479 (GMYVFQLFDYYSAS) the chain is on the extracellular side. Residues 480-500 (GTTLLWQAFWECVVVAWVYGA) traverse the membrane as a helical segment. The Cytoplasmic portion of the chain corresponds to 501 to 520 (DRFMDDIACMIGYRPCPWMK). Residues 521–541 (WCWSFFTPLVCMGIFIFNIVY) traverse the membrane as a helical segment. The Extracellular portion of the chain corresponds to 542-560 (YEPLVYNNTYVYPWWGEAM). Asn548 is a glycosylation site (N-linked (GlcNAc...) asparagine). The chain crosses the membrane as a helical span at residues 561–581 (GWAFALSSMLCVPLHLLGCLL). The Cytoplasmic portion of the chain corresponds to 582-635 (RAKGTMAERWQHLTQPIWGLHHLEYRAQDADVRGLTTLTPVSESSKVVVVESVM). A phosphothreonine mark is found at Thr617 and Thr620. Residue Ser623 is modified to Phosphoserine.

This sequence belongs to the sodium:neurotransmitter symporter (SNF) (TC 2.A.22) family. SLC6A8 subfamily. Post-translationally, glycosylated. As to expression, brain. Highly expressed in brain capillaries branching in all cortical layers and moderately expressed in neuronal perikarya (at protein level).

It is found in the cell membrane. The protein localises to the apical cell membrane. The catalysed reaction is creatine(out) + chloride(out) + 2 Na(+)(out) = creatine(in) + chloride(in) + 2 Na(+)(in). In terms of biological role, creatine:sodium symporter which mediates the uptake of creatine. Plays an important role in supplying creatine to the brain via the blood-brain barrier. The protein is Sodium- and chloride-dependent creatine transporter 1 (Slc6a8) of Mus musculus (Mouse).